We begin with the raw amino-acid sequence, 367 residues long: MSISSKIRPTPRKPSRMATDHSFKMKNFYADPFAISSISLAIVSWVIAIGGSISSASTNESFPRFTWWGIVYQFLTICSLMLFYCFDLVDHYRIFITTSIAVAFVYNTNSATNLVYADGSKKAAASAGVILLSIINLIWILYYGGDNASPTNRWIDSFSIKGIRPSPLENSLHRARRRGNRNTTPYQNNVYNDAIRDSGYATQFDGYPQQQPSHTNYVSSTALAGFENTQPNTSEAVNLHLNTLQQHINSASNAKETNDNSNNQTNTNIGNTFDTDFSNGNTETTMGDTLGLYSDIGDDNFIYKAKALYPYDADDDDAYEISFEQNEILQVSDIEGRWWKARRANGETGIIPSNYVQLIDGPEEMHR.

Over 1–32 (MSISSKIRPTPRKPSRMATDHSFKMKNFYADP) the chain is Cytoplasmic. Residues 33 to 53 (FAISSISLAIVSWVIAIGGSI) form a helical membrane-spanning segment. The Extracellular portion of the chain corresponds to 54–65 (SSASTNESFPRF). An N-linked (GlcNAc...) asparagine glycan is attached at Asn-59. A helical transmembrane segment spans residues 66–86 (TWWGIVYQFLTICSLMLFYCF). At 87–93 (DLVDHYR) the chain is on the cytoplasmic side. Residues 94–114 (IFITTSIAVAFVYNTNSATNL) traverse the membrane as a helical segment. The Extracellular segment spans residues 115–122 (VYADGSKK). Residues 123–143 (AAASAGVILLSIINLIWILYY) traverse the membrane as a helical segment. Residues 144–367 (GGDNASPTNR…LIDGPEEMHR (224 aa)) are Cytoplasmic-facing. Position 166 is a phosphoserine (Ser-166). Residues 253–276 (NAKETNDNSNNQTNTNIGNTFDTD) are disordered. Residues 259 to 272 (DNSNNQTNTNIGNT) show a composition bias toward low complexity. The SH3 domain maps to 300–361 (NFIYKAKALY…PSNYVQLIDG (62 aa)).

This sequence belongs to the SHO1 family. In terms of assembly, forms homooligomers. Interacts (via the SH3 domain) with PBS2. Interacts with FUS1, STE11, STE50 and RNA polymerase II.

The protein resides in the cell membrane. It localises to the bud. It is found in the bud neck. Its subcellular location is the cell projection. Functionally, plasma membrane osmosensor that activates the high osmolarity glycerol (HOG) MAPK signaling pathway in response to high osmolarity. Detects changes in external osmolarity and activates PBS2 through the stimulation of STE11 and targets PBS2 to the plasma membrane. PBS2 activation leads to changes in glycerol production that helps to balance the intracellular and external osmotic pressures. Activates also HOG1 in response to heat stress and mediates resistance to oxidative stress. Involved in the regulation of the mating pathway. May be a receptor that feeds into the pseudohyphal growth pathway. The protein is High osmolarity signaling protein SHO1 (SHO1) of Saccharomyces cerevisiae (strain YJM789) (Baker's yeast).